The following is a 63-amino-acid chain: Toxin Cn11 (63 aa).

One can recognise an LCN-type CS-alpha/beta domain in the interval 2–63 (RDGYPVDEKG…KVWTYETNTC (62 aa)). Disulfide bonds link C12-C63, C16-C37, C23-C44, and C27-C46.

Belongs to the long (4 C-C) scorpion toxin superfamily. Sodium channel inhibitor family. As to expression, expressed by the venom gland.

The protein localises to the secreted. Its function is as follows. First blocker of sodium channels (Nav) found in scorpions. Is lethal to crustaceans (Cambarellus montezumae), less toxic to insects (crickets) and non-toxic to mammals (mice) at the doses assayed. This chain is Toxin Cn11, found in Centruroides noxius (Mexican scorpion).